We begin with the raw amino-acid sequence, 375 residues long: Glutamate 5-kinase (375 aa).

An ATP-binding site is contributed by Lys17. Positions 58, 145, and 157 each coordinate substrate. ATP contacts are provided by residues 177–178 (SD) and 219–225 (TGGMVTK). A PUA domain is found at 281–359 (QGALTLDDGA…RELARELGPA (79 aa)).

This sequence belongs to the glutamate 5-kinase family.

It localises to the cytoplasm. It catalyses the reaction L-glutamate + ATP = L-glutamyl 5-phosphate + ADP. The protein operates within amino-acid biosynthesis; L-proline biosynthesis; L-glutamate 5-semialdehyde from L-glutamate: step 1/2. Functionally, catalyzes the transfer of a phosphate group to glutamate to form L-glutamate 5-phosphate. This is Glutamate 5-kinase from Streptomyces avermitilis (strain ATCC 31267 / DSM 46492 / JCM 5070 / NBRC 14893 / NCIMB 12804 / NRRL 8165 / MA-4680).